An 89-amino-acid chain; its full sequence is Small ribosomal subunit protein uS15 (89 aa).

This sequence belongs to the universal ribosomal protein uS15 family. As to quaternary structure, part of the 30S ribosomal subunit. Forms a bridge to the 50S subunit in the 70S ribosome, contacting the 23S rRNA.

In terms of biological role, one of the primary rRNA binding proteins, it binds directly to 16S rRNA where it helps nucleate assembly of the platform of the 30S subunit by binding and bridging several RNA helices of the 16S rRNA. Its function is as follows. Forms an intersubunit bridge (bridge B4) with the 23S rRNA of the 50S subunit in the ribosome. The chain is Small ribosomal subunit protein uS15 from Roseiflexus sp. (strain RS-1).